Consider the following 687-residue polypeptide: Elongation factor G (687 aa).

Residues 8–282 enclose the tr-type G domain; it reads NKFRNIGIMA…AVLAYLPSPL (275 aa). Residues 17–24, 81–85, and 135–138 contribute to the GTP site; these read AHIDAGKT, DTPGH, and NKMD.

Belongs to the TRAFAC class translation factor GTPase superfamily. Classic translation factor GTPase family. EF-G/EF-2 subfamily.

The protein resides in the cytoplasm. Catalyzes the GTP-dependent ribosomal translocation step during translation elongation. During this step, the ribosome changes from the pre-translocational (PRE) to the post-translocational (POST) state as the newly formed A-site-bound peptidyl-tRNA and P-site-bound deacylated tRNA move to the P and E sites, respectively. Catalyzes the coordinated movement of the two tRNA molecules, the mRNA and conformational changes in the ribosome. This chain is Elongation factor G, found in Clostridium novyi (strain NT).